A 596-amino-acid polypeptide reads, in one-letter code: Arginine--tRNA ligase (596 aa).

A 'HIGH' region motif is present at residues Ala-139–His-149.

The protein belongs to the class-I aminoacyl-tRNA synthetase family. Monomer.

The protein resides in the cytoplasm. The enzyme catalyses tRNA(Arg) + L-arginine + ATP = L-arginyl-tRNA(Arg) + AMP + diphosphate. The protein is Arginine--tRNA ligase of Paraburkholderia phytofirmans (strain DSM 17436 / LMG 22146 / PsJN) (Burkholderia phytofirmans).